Reading from the N-terminus, the 125-residue chain is Aldolase FrzH (125 aa).

The enzyme catalyses (2S)-3-(4-methoxyphenyl)-2-[(3S)-3-(methylamino)-8-oxo-1-azaspiro[4.5]decan-1-yl]propanal = (1S,3S,6S,7S,8R)-7-hydroxy-6-[(4-methoxyphenyl)methyl]-3-(methylamino)-5-azatricyclo[6.3.1.0(1,5)]dodecan-9-one. The protein operates within secondary metabolite biosynthesis. In terms of biological role, aldolase; part of the gene cluster that mediates the biosynthesis of the alkaloid (-)-FR901483, a potent immunosuppressant that shows efficacy in animal models and a probable inhibitor of purine nucleotide biosynthesis by targeting phosphoribosylpyrophosphate amidotransferase (PPAT). Within the pathway, FrzH is a new kind of aldolase with no similarities to known aldolases, and which catalyzes the intramolecular aldol condensation via formation of a C9-C3' bond to yield an aza-tricyclic product. The biosynthesis of (-)-FR901483 starts with the condensation of two L-tyrosines to yield (S,S)-dityrosyl-piperazine. This process occurs in 3 steps with the non-canonical nonribosomal peptide synthetase FrzA catalyzing the reduction of L-tyrosine into L-tyrosinal, the spontaneous condensation of 2 L-tyrosinal units, and the subsequent reduction by the NmrA-like family domain-containing oxidoreductase FrzB. The cytochrome P450 monooxygenase FrzC then performs coupling between N10 and C1' to morph the piperazine into a 1,4-diazabicyclo[3.2.1]octane spiro-fused to a 2,5-cyclohexadienone. The dienone portion is further reduced to cyclohexanone by the flavin-dependent reductase FrzD. The methyltranserases (MTs) FrzE and FrzF are then involved in the methylation at the C10' amine and the C4 phenolic oxygen, respectively. The order of the two MTs appear to be interchangeable. Cleavage of the C9-N10' bond by the dioxygenase FrzG then leads to formation of a conjugated iminium. In addition to the oxidation of C9, an additional dehydrogenation between C7 and C8 can occur to give a likely shunt product. The next biosynthetic step is the intramolecular aldol condensation catalyzed by the newly identified aldolase FrzH to yield an aza-tricyclic product with the formation of a C9-C3' bond. The short-chain dehydrogenase/reductase FrzI then produces dephospho-(-)-FR901483 that is phosphorylated at C4'-OH into (-)-FR901483 by the phosphotransferase FrzJ. The protein is Aldolase FrzH of Cladobotryum sp.